Here is a 126-residue protein sequence, read N- to C-terminus: MGDYVVVLEAPIIVRDVETSEDAINVAVSKVAKALNKEKLDFVRVEIGYSQCPVCGAHFESAFVIGSVGLVGMYLTIKVYNAQTIEHAERIAKAVIGKALKKVPLKVYEIRELTEEEEGEGVEFEE.

The protein belongs to the UPF0212 family.

The sequence is that of UPF0212 protein TON_0350 from Thermococcus onnurineus (strain NA1).